We begin with the raw amino-acid sequence, 181 residues long: Ribonuclease M5 (181 aa).

The 84-residue stretch at lysine 5 to aspartate 88 folds into the Toprim domain. Mg(2+) contacts are provided by glutamate 11, aspartate 57, and aspartate 59.

The protein belongs to the ribonuclease M5 family. The cofactor is Mg(2+).

The protein resides in the cytoplasm. The catalysed reaction is Endonucleolytic cleavage of RNA, removing 21 and 42 nucleotides, respectively, from the 5'- and 3'-termini of a 5S-rRNA precursor.. In terms of biological role, required for correct processing of both the 5' and 3' ends of 5S rRNA precursor. Cleaves both sides of a double-stranded region yielding mature 5S rRNA in one step. The chain is Ribonuclease M5 from Borreliella burgdorferi (strain ATCC 35210 / DSM 4680 / CIP 102532 / B31) (Borrelia burgdorferi).